Reading from the N-terminus, the 297-residue chain is 4-hydroxy-tetrahydrodipicolinate synthase (297 aa).

Thr-47 contributes to the pyruvate binding site. Tyr-136 serves as the catalytic Proton donor/acceptor. The active-site Schiff-base intermediate with substrate is the Lys-165. Ile-206 is a binding site for pyruvate.

The protein belongs to the DapA family. In terms of assembly, homotetramer; dimer of dimers.

The protein localises to the cytoplasm. The catalysed reaction is L-aspartate 4-semialdehyde + pyruvate = (2S,4S)-4-hydroxy-2,3,4,5-tetrahydrodipicolinate + H2O + H(+). The protein operates within amino-acid biosynthesis; L-lysine biosynthesis via DAP pathway; (S)-tetrahydrodipicolinate from L-aspartate: step 3/4. Catalyzes the condensation of (S)-aspartate-beta-semialdehyde [(S)-ASA] and pyruvate to 4-hydroxy-tetrahydrodipicolinate (HTPA). In Campylobacter curvus (strain 525.92), this protein is 4-hydroxy-tetrahydrodipicolinate synthase.